Here is a 99-residue protein sequence, read N- to C-terminus: DNA-binding protein HU (99 aa).

The interval 67-86 (REGRNPKTGAKMKIDAYNQP) is disordered.

The protein belongs to the bacterial histone-like protein family. Homodimer.

Functionally, histone-like DNA-binding protein which is capable of wrapping DNA to stabilize it, and thus to prevent its denaturation under extreme environmental conditions. This chain is DNA-binding protein HU (hup), found in Rickettsia conorii (strain ATCC VR-613 / Malish 7).